A 359-amino-acid polypeptide reads, in one-letter code: Fructose-bisphosphate aldolase (359 aa).

Ser-50 serves as a coordination point for D-glyceraldehyde 3-phosphate. The active-site Proton donor is Asp-83. His-84, Asp-105, Glu-142, and His-198 together coordinate Zn(2+). Gly-199 lines the dihydroxyacetone phosphate pocket. His-232 contributes to the Zn(2+) binding site. Dihydroxyacetone phosphate-binding positions include 233-235 (GSS) and 275-278 (NIDT).

It belongs to the class II fructose-bisphosphate aldolase family. In terms of assembly, homodimer. Zn(2+) serves as cofactor.

The catalysed reaction is beta-D-fructose 1,6-bisphosphate = D-glyceraldehyde 3-phosphate + dihydroxyacetone phosphate. It participates in carbohydrate biosynthesis; Calvin cycle. It functions in the pathway carbohydrate degradation; glycolysis; D-glyceraldehyde 3-phosphate and glycerone phosphate from D-glucose: step 4/4. In terms of biological role, catalyzes the aldol condensation of dihydroxyacetone phosphate (DHAP or glycerone-phosphate) with glyceraldehyde 3-phosphate (G3P) to form fructose 1,6-bisphosphate (FBP) in gluconeogenesis and the reverse reaction in glycolysis. This is Fructose-bisphosphate aldolase (cbbA) from Sinorhizobium medicae (strain WSM419) (Ensifer medicae).